A 22-amino-acid polypeptide reads, in one-letter code: Polydim-I (22 aa).

As to expression, expressed by the venom gland.

The protein localises to the secreted. In terms of biological role, antibacterial peptide. Acts on the Mycobacterium abscessus subsp. massiliense cell wall. Reduces 40-50% of the bacterial load in macrophages infected with different M.abscessus strains. Is not cytotoxic towards mammalian cells, and shows no hemolytic activity against human erythrocytes. In vivo, reduces the bacterial load in the lungs, spleen, and liver of highly susceptible mice intravenously infected with M.abscessus. The protein is Polydim-I of Polybia dimorpha (Neotropical wasp).